The sequence spans 128 residues: Small ribosomal subunit protein bS6 (128 aa).

Belongs to the bacterial ribosomal protein bS6 family.

In terms of biological role, binds together with bS18 to 16S ribosomal RNA. The protein is Small ribosomal subunit protein bS6 of Leifsonia xyli subsp. xyli (strain CTCB07).